The sequence spans 86 residues: U18-theraphotoxin-Cg1a (86 aa).

The N-terminal stretch at 1 to 20 is a signal peptide; it reads KASVLITLAVLGVMFVWTSA. A propeptide spanning residues 21 to 49 is cleaved from the precursor; the sequence is AELEERGSDQRDSPALIKSMAKVFQSEER. 3 disulfide bridges follow: Cys51–Cys65, Cys58–Cys70, and Cys64–Cys78. The residue at position 84 (Phe84) is a Phenylalanine amide.

It belongs to the neurotoxin 10 (Hwtx-1) family. 47 subfamily. As to expression, expressed by the venom gland.

It is found in the secreted. Functionally, inhibits TTX-sensitive and TTX-insensitive sodium currents (IC(50) is 0.6 uM and 0.95 uM respectively) on rat dorsal root ganglion (DRG) neurons. Inhibits muscular subtypes sodium channels Nav1.4/SCN4A and Nav1.5/SCN5A transiently transfected in to HEK293 cells (IC(50) is 5.42 uM and 0.45 uM respectively). Also blocks Kv2.1/KCNB1 potassium channels expressed in X.laevis oocytes with an IC(50) of 604 nM. Injection of the toxin in mice was immediately followed by general ataxia, lack of response to stimuli and semiparalysis. The chain is U18-theraphotoxin-Cg1a from Chilobrachys guangxiensis (Chinese earth tiger tarantula).